A 189-amino-acid polypeptide reads, in one-letter code: Probable nicotinate-nucleotide adenylyltransferase (189 aa).

It belongs to the NadD family.

The catalysed reaction is nicotinate beta-D-ribonucleotide + ATP + H(+) = deamido-NAD(+) + diphosphate. It participates in cofactor biosynthesis; NAD(+) biosynthesis; deamido-NAD(+) from nicotinate D-ribonucleotide: step 1/1. In terms of biological role, catalyzes the reversible adenylation of nicotinate mononucleotide (NaMN) to nicotinic acid adenine dinucleotide (NaAD). The polypeptide is Probable nicotinate-nucleotide adenylyltransferase (Bacillus cytotoxicus (strain DSM 22905 / CIP 110041 / 391-98 / NVH 391-98)).